The chain runs to 35 residues: Purotoxin-1 (35 aa).

Disulfide bonds link Cys3–Cys16, Cys10–Cys21, Cys15–Cys32, and Cys23–Cys30.

The protein belongs to the neurotoxin 33 family. Expressed by the venom gland.

The protein resides in the secreted. Its function is as follows. Inhibits P2RX3 receptors. Has an analgesic effect in rat. Enhances the high-affinity desensitization of P2RX3 purinoceptors. At 50 nM, decreases the IC(50) for ambient ATP from 46.5 nM to 12.7 nM in mouse P2RX3. The sequence is that of Purotoxin-1 from Alopecosa marikovskyi (Wolf spider).